The primary structure comprises 499 residues: E3 ubiquitin-protein ligase TRIM69 (499 aa).

Residues 1–152 (MEVSSRPPSN…SMGQSKDFLQ (152 aa)) form a necessary for nuclear localization region. An RING-type zinc finger spans residues 41–82 (CPLCNDWFRDPLMLTCGHNFCQACIQNYWKMQAKETFCPECK). Positions 160-265 (FTEELAIYQS…NIQARMEQQN (106 aa)) form a coiled coil. A B30.2/SPRY domain is found at 305–499 (PIQYTIWREM…KEPLHIVHPQ (195 aa)). At Ser-341 the chain carries Phosphoserine.

The protein belongs to the TRIM/RBCC family. In terms of assembly, homo-multimer; required for antiviral activity. Interacts with PML. In terms of processing, phosphorylated. Phosphorylation is necessary for nuclear localization.

It localises to the cytoplasm. The protein resides in the nucleus. The protein localises to the nucleus speckle. Its subcellular location is the cytoskeleton. It is found in the microtubule organizing center. It localises to the centrosome. It catalyses the reaction S-ubiquitinyl-[E2 ubiquitin-conjugating enzyme]-L-cysteine + [acceptor protein]-L-lysine = [E2 ubiquitin-conjugating enzyme]-L-cysteine + N(6)-ubiquitinyl-[acceptor protein]-L-lysine.. It participates in protein modification; protein ubiquitination. E3 ubiquitin ligase that plays an important role in antiviral immunity by restricting different viral infections including dengue virus or vesicular stomatitis indiana virus. Ubiquitinates viral proteins such as dengue virus NS3 thereby limiting infection. In addition, acts as a key mediator of type I interferon induced microtubule stabilization by directly associating to microtubules independently of its E3 ligase activity. Also plays a role in cataract formation together with TP53. Mechanistically, inhibits UVB-induced cell apoptosis and reactive oxygen species (ROS) production by inducing TP53 ubiquitination. Regulates centrosome dynamics and mitotic progression by ubiquitinating STK3/MST2; leading to its redistribution to the perinuclear cytoskeleton and subsequent phosphorylation by PLK1. The chain is E3 ubiquitin-protein ligase TRIM69 (Trim69) from Rattus norvegicus (Rat).